The primary structure comprises 244 residues: U11/U12 small nuclear ribonucleoprotein 35 kDa protein (244 aa).

The RRM domain occupies 51-129; the sequence is LTLFVARLNS…HEIFVDYELE (79 aa). The segment covering 146–162 has biased composition (basic and acidic residues); sequence GKKESGQLRFGGRDRPF. Positions 146 to 244 are disordered; that stretch reads GKKESGQLRF…KTRDKRDRSK (99 aa). Residue K172 forms a Glycyl lysine isopeptide (Lys-Gly) (interchain with G-Cter in SUMO2) linkage. Basic and acidic residues-rich tracts occupy residues 173–185 and 192–244; these read NEPH…ERRE and RHWD…DRSK.

Component of the U11/U12 snRNPs that are part of the U12-type spliceosome.

It localises to the nucleus. The chain is U11/U12 small nuclear ribonucleoprotein 35 kDa protein (Snrnp35) from Rattus norvegicus (Rat).